The sequence spans 566 residues: Chaperonin GroEL 1 (566 aa).

ATP contacts are provided by residues 29 to 32 (TIGP), 86 to 90 (DGTTT), Gly-413, and Asp-492. The interval 520 to 540 (DKPEPPAPAGDGGGDPMGGMG) is disordered. Gly residues predominate over residues 529–540 (GDGGGDPMGGMG).

This sequence belongs to the chaperonin (HSP60) family. In terms of assembly, forms a cylinder of 14 subunits composed of two heptameric rings stacked back-to-back. Interacts with the co-chaperonin GroES.

It is found in the cytoplasm. The catalysed reaction is ATP + H2O + a folded polypeptide = ADP + phosphate + an unfolded polypeptide.. Together with its co-chaperonin GroES, plays an essential role in assisting protein folding. The GroEL-GroES system forms a nano-cage that allows encapsulation of the non-native substrate proteins and provides a physical environment optimized to promote and accelerate protein folding. The polypeptide is Chaperonin GroEL 1 (Prochlorococcus marinus (strain MIT 9313)).